The sequence spans 799 residues: Ribosome-releasing factor 2, mitochondrial (799 aa).

Residues 19-306 enclose the tr-type G domain; sequence SKIRNIGIIA…AVVNYLPSPL (288 aa). GTP contacts are provided by residues 28 to 35, 93 to 97, and 145 to 148; these read AHIDAGKT, DTPGH, and NKMD.

This sequence belongs to the TRAFAC class translation factor GTPase superfamily. Classic translation factor GTPase family. EF-G/EF-2 subfamily.

Its subcellular location is the mitochondrion. Its function is as follows. Mitochondrial GTPase that mediates the disassembly of ribosomes from messenger RNA at the termination of mitochondrial protein biosynthesis. Not involved in the GTP-dependent ribosomal translocation step during translation elongation. In Vanderwaltozyma polyspora (strain ATCC 22028 / DSM 70294 / BCRC 21397 / CBS 2163 / NBRC 10782 / NRRL Y-8283 / UCD 57-17) (Kluyveromyces polysporus), this protein is Ribosome-releasing factor 2, mitochondrial.